Consider the following 357-residue polypeptide: DNA replication and repair protein RecF (357 aa).

30-37 serves as a coordination point for ATP; it reads GANGSGKT.

The protein belongs to the RecF family.

It localises to the cytoplasm. In terms of biological role, the RecF protein is involved in DNA metabolism; it is required for DNA replication and normal SOS inducibility. RecF binds preferentially to single-stranded, linear DNA. It also seems to bind ATP. This chain is DNA replication and repair protein RecF, found in Enterobacter sp. (strain 638).